We begin with the raw amino-acid sequence, 254 residues long: Triosephosphate isomerase (254 aa).

N12–K14 lines the substrate pocket. The active-site Electrophile is H99. E169 functions as the Proton acceptor in the catalytic mechanism. Substrate contacts are provided by residues G175, S214, and G235–G236.

The protein belongs to the triosephosphate isomerase family. In terms of assembly, homodimer.

The protein localises to the cytoplasm. It catalyses the reaction D-glyceraldehyde 3-phosphate = dihydroxyacetone phosphate. Its pathway is carbohydrate biosynthesis; gluconeogenesis. It participates in carbohydrate degradation; glycolysis; D-glyceraldehyde 3-phosphate from glycerone phosphate: step 1/1. Involved in the gluconeogenesis. Catalyzes stereospecifically the conversion of dihydroxyacetone phosphate (DHAP) to D-glyceraldehyde-3-phosphate (G3P). This is Triosephosphate isomerase from Chelativorans sp. (strain BNC1).